Here is a 207-residue protein sequence, read N- to C-terminus: Guanylate kinase (207 aa).

Residues 4–184 (GTLYIVSAPS…ALSDLKTIIR (181 aa)) enclose the Guanylate kinase-like domain. 11–18 (APSGAGKS) lines the ATP pocket.

It belongs to the guanylate kinase family.

The protein localises to the cytoplasm. It carries out the reaction GMP + ATP = GDP + ADP. In terms of biological role, essential for recycling GMP and indirectly, cGMP. The chain is Guanylate kinase (gmk) from Salmonella typhimurium (strain LT2 / SGSC1412 / ATCC 700720).